Here is a 1143-residue protein sequence, read N- to C-terminus: Serine/threonine-protein kinase BRI1-like 2 (1143 aa).

An N-terminal signal peptide occupies residues 1-31; it reads MTTSPIRVRIRTRIQISFIFLLTHLSQSSSS. Over 32–756 the chain is Extracellular; it reads DQSSLKTDSL…GTRAASWANS (725 aa). Positions 68 to 75 match the Cys pair 1 motif; sequence CQFSGVTC. LRR repeat units lie at residues 77-101, 102-125, 126-150, 151-175, 177-200, 203-227, 228-250, 251-275, 277-299, 300-324, 326-349, 351-373, 374-398, 399-422, 424-446, 447-470, 472-493, 494-518, 520-542, 570-594, 610-634, 635-660, 662-681, and 682-707; these read GGRV…AFTS, LDSL…LLLL, PLTL…FFSK, YSNL…LFLS, KKLQ…TIPL, CVSM…LINC, TNLK…SFGE, LKLL…IGDT, RSLQ…SLSS, CSWL…ILRS, GSLQ…ISAC, SLRI…LCPG, AASL…ISQC, SELR…IGNL, KLEQ…IGKL, QNLK…FFNC, NIEW…DFGI, LSRL…LGKC, TLVW…LGRQ, VGGL…KSCD, YQTI…IGEM, IALQ…QLKN, GVFD…SFSN, and LSFL…QLST. 2 N-linked (GlcNAc...) asparagine glycosylation sites follow: asparagine 84 and asparagine 118. Asparagine 163, asparagine 188, asparagine 226, and asparagine 234 each carry an N-linked (GlcNAc...) asparagine glycan. N-linked (GlcNAc...) asparagine glycosylation is found at asparagine 288 and asparagine 312. A glycan (N-linked (GlcNAc...) asparagine) is linked at asparagine 412. An N-linked (GlcNAc...) asparagine glycan is attached at asparagine 469. Residue asparagine 506 is glycosylated (N-linked (GlcNAc...) asparagine). Asparagine 681 is a glycosylation site (N-linked (GlcNAc...) asparagine). Residues 720–727 carry the Cys pair 2 motif; it reads CGVPLPEC. Residues 757–777 form a helical membrane-spanning segment; it reads IVLGVLISAASVCILIVWAIA. Over 778-1143 the chain is Cytoplasmic; the sequence is VRARRRDADD…NNSHSHSNSL (366 aa). The residue at position 835 (threonine 835) is a Phosphothreonine. The region spanning 838 to 1129 is the Protein kinase domain; that stretch reads FSAASMIGHG…LQVVASLREL (292 aa). Residues 844–852 and lysine 866 each bind ATP; that span reads IGHGGFGEV. Tyrosine 911 bears the Phosphotyrosine mark. Aspartate 966 (proton acceptor) is an active-site residue. Phosphoserine is present on serine 1001. Phosphotyrosine is present on tyrosine 1009.

Belongs to the protein kinase superfamily. Ser/Thr protein kinase family. As to quaternary structure, interacts with TTL3. As to expression, expressed in provascular and procambial sites throughout plant development. Expressed throughout globe- to heart-staged embryos. Then, it is restricted to procambial cells by the late torpedo stage, and this pattern persists throughout the duration of embryo development. After germination, it is expressed not only in procambial cells throughout the plant but also in all lateral organ primordia before the onset of vascularization.

It localises to the cell membrane. It carries out the reaction L-seryl-[protein] + ATP = O-phospho-L-seryl-[protein] + ADP + H(+). It catalyses the reaction L-threonyl-[protein] + ATP = O-phospho-L-threonyl-[protein] + ADP + H(+). Functionally, receptor with a serine/threonine-protein kinase activity, which may transduce extracellular spatial and temporal signals into downstream cell differentiation responses in provascular and procambial cells. In contrast to BRI1, BRL1 and BRL3, it does not bind brassinolide. In Arabidopsis thaliana (Mouse-ear cress), this protein is Serine/threonine-protein kinase BRI1-like 2.